Here is a 389-residue protein sequence, read N- to C-terminus: Chaperone protein DnaJ (389 aa).

Positions Asp-6–Gly-70 constitute a J domain. The segment at Gly-142–Ala-224 adopts a CR-type zinc-finger fold. The Zn(2+) site is built by Cys-155, Cys-158, Cys-172, Cys-175, Cys-198, Cys-201, Cys-212, and Cys-215. 4 CXXCXGXG motif repeats span residues Cys-155–Gly-162, Cys-172–Gly-179, Cys-198–Gly-205, and Cys-212–Gly-219.

This sequence belongs to the DnaJ family. As to quaternary structure, homodimer. Zn(2+) is required as a cofactor.

The protein localises to the cytoplasm. Participates actively in the response to hyperosmotic and heat shock by preventing the aggregation of stress-denatured proteins and by disaggregating proteins, also in an autonomous, DnaK-independent fashion. Unfolded proteins bind initially to DnaJ; upon interaction with the DnaJ-bound protein, DnaK hydrolyzes its bound ATP, resulting in the formation of a stable complex. GrpE releases ADP from DnaK; ATP binding to DnaK triggers the release of the substrate protein, thus completing the reaction cycle. Several rounds of ATP-dependent interactions between DnaJ, DnaK and GrpE are required for fully efficient folding. Also involved, together with DnaK and GrpE, in the DNA replication of plasmids through activation of initiation proteins. This Enterococcus faecalis (strain ATCC 700802 / V583) protein is Chaperone protein DnaJ.